The primary structure comprises 497 residues: Signal recognition particle subunit SRP54 1 (497 aa).

The G-domain stretch occupies residues 1–295; it reads MVLAQLGGSI…DVKPFVSRLL (295 aa). GTP contacts are provided by residues 108–115, 190–194, and 248–251; these read GLQGSGKT, DTSGR, and TKLD. Residues 296–497 form an M-domain region; the sequence is GMGDLSGLMD…MLGGMGLGGD (202 aa).

The protein belongs to the GTP-binding SRP family. SRP54 subfamily. Component of a signal recognition particle (SRP) complex that consists of a 7SL RNA molecule of 300 nucleotides and six protein subunits: SRP72, SRP68, SRP54, SRP19, SRP14 and SRP9.

The protein resides in the cytoplasm. The protein localises to the endoplasmic reticulum. The catalysed reaction is GTP + H2O = GDP + phosphate + H(+). Functionally, component of the signal recognition particle (SRP) complex, a ribonucleoprotein complex that mediates the cotranslational targeting of secretory and membrane proteins to the endoplasmic reticulum (ER). As part of the SRP complex, associates with the SRP receptor (SR) component SRPRA to target secretory proteins to the endoplasmic reticulum membrane. Binds to the signal sequence of presecretory proteins when they emerge from the ribosomes. Displays basal GTPase activity, and stimulates reciprocal GTPase activation of the SR subunit SRPRA. Forms a guanosine 5'-triphosphate (GTP)-dependent complex with the SR subunit SRPRA. SR compaction and GTPase mediated rearrangement of SR drive SRP-mediated cotranslational protein translocation into the ER. Requires the presence of SRP9/SRP14 and/or SRP19 to stably interact with RNA. This chain is Signal recognition particle subunit SRP54 1 (SRP54-1), found in Hordeum vulgare (Barley).